We begin with the raw amino-acid sequence, 96 residues long: uncharacterized protein (96 aa).

The first 19 residues, 1–19, serve as a signal peptide directing secretion; the sequence is MKQIIPALITLSFSPMAIA.

This is an uncharacterized protein from Synechocystis sp. (strain ATCC 27184 / PCC 6803 / Kazusa).